A 469-amino-acid polypeptide reads, in one-letter code: Receptor-type adenylate cyclase (469 aa).

Topologically, residues 1 to 59 (VDTAEKLSKNGCASNYGATQISVWSMARALNASIPPLTNPMTPSMTFRNSNAGRISGVA) are extracellular. Residue asparagine 31 is glycosylated (N-linked (GlcNAc...) asparagine). A helical transmembrane segment spans residues 60–80 (LVGVIIGGALALFLVVALGVV). The Cytoplasmic portion of the chain corresponds to 81-469 (PYFFLHNTRD…IDLENDSTTS (389 aa)). In terms of domain architecture, Guanylate cyclase spans 103 to 257 (TLIFTDIESS…RTSNMAARTE (155 aa)). Mg(2+) is bound by residues aspartate 108 and aspartate 151.

Belongs to the adenylyl cyclase class-3 family. Mg(2+) is required as a cofactor.

The protein localises to the cell membrane. It carries out the reaction ATP = 3',5'-cyclic AMP + diphosphate. In terms of biological role, could act as a receptor for an unknown ligand. This is Receptor-type adenylate cyclase (ESAG4C) from Trypanosoma equiperdum.